The following is a 109-amino-acid chain: Phosphoribosyl-ATP pyrophosphatase (109 aa).

This sequence belongs to the PRA-PH family.

It is found in the cytoplasm. It carries out the reaction 1-(5-phospho-beta-D-ribosyl)-ATP + H2O = 1-(5-phospho-beta-D-ribosyl)-5'-AMP + diphosphate + H(+). The protein operates within amino-acid biosynthesis; L-histidine biosynthesis; L-histidine from 5-phospho-alpha-D-ribose 1-diphosphate: step 2/9. The sequence is that of Phosphoribosyl-ATP pyrophosphatase from Marinobacter nauticus (strain ATCC 700491 / DSM 11845 / VT8) (Marinobacter aquaeolei).